Reading from the N-terminus, the 720-residue chain is MELFSDSGSIVENFKERINKLVFDYSLNHGGFRKTYKIQRDRVYYMLGDAHHANLSGKCLMLYNSEKDIFEGLGFKVKGSRINVSKTQILRNYEINFETIIGVEPNGLKTISTAKDVKKLYDIYSYKSSLHPFDDFMAHCINRWGMSIPASLERIIKSEIIKVRSGVLNRNSELYNYIPTVDASFSEMSRGPANVILTDGKLVPDGTCFGPILSKSVEDPRLKNEFRSKGLIMVHDYFILIGESPGPHYKKYTKMTKDNTIFWDPRRTDHKFNNVVSYFKKENIRDVVEYTTDALNRGLKPLVLIDIRKDKPKNLNTPEGAIEWERMVHDDNNLIIDMVNALDKRVTVCAKLRPAFMQVGSMRKLLRPVRILPLPYLRRSTAEFNMFVPNEALMNGNEIYDVTYDDLVRMSSEVFVLKNIIGGLYNMYLKDMHLNLGVVNKSVSLSDGSSAIWSLSNINNERISNFNFNNFLYAAPYSDFATSSVKRHFKGRNYSDWCLNILDEVNLKDGVYLVPLYAIVGGGQITSHDFVNAIITDQEQLIDFTQSERALSTQVVKLVSFILKDSFTAKGLNWTEIDNEIRNRRLSSLSGVGFTVTKMLDGKVLVDGKVVTVSGHMLYILLGSILGLPYGIKKYLKEIELNILKPGSSYERGVGGRVWHGLISHYLAVDCVIDVIDEYMVCTYEDRSKLNVVLRYVKSKLLELGSKYDVYLSVDERLVL.

The protein resides in the virion. The catalysed reaction is a 5'-end diphospho-ribonucleoside in mRNA + GTP + H(+) = a 5'-end (5'-triphosphoguanosine)-ribonucleoside in mRNA + diphosphate. It carries out the reaction a 5'-end (5'-triphosphoguanosine)-ribonucleoside in mRNA + S-adenosyl-L-methionine = a 5'-end (N(7)-methyl 5'-triphosphoguanosine)-ribonucleoside in mRNA + S-adenosyl-L-homocysteine. Functionally, outer capsid protein involved in mRNA capping. Catalyzes the last 3 enzymatic activities for formation of the 5' cap structure on the viral plus-strand transcripts, namely the RNA guanylyltransferase, RNA-7N- and RNA-2'O-methyltransferase activities. The protein is Viral guanylyltransferase VP3 (Segment-3) of Banna virus (BAV).